Consider the following 427-residue polypeptide: MTTIMVATMIGLLLLGFPMMIPLATASIIGFFMMFGGLGQMETLIQQLMAGIRPASLIAVPMFILAADIMTRGQSANRLINMVMAFIGHIKGGLAVSTAASCTLFGAVSGSTQATVVAVGSPLRPRMLKAGYSDSFSLALIINSSDIAFLIPPSIGMIIYGIISGTSIGELFIAGIGPGLMILVMFAIYCVIYAIVRGVPTEPKASWGERFSAVRLALWPLGFPVIIIGGIYGGIFSPTEAAAACVLYAVLLEFVVFRSLKISDIYAIAKSTGLITAVVFILVAVGNSFSWIISFAQIPQAILEAVGINEAGPTGVLIAICVAFFVACMFVDPIVVILVLTPVFAPAIEATGLDPVLVGILITLQVAIGSATPPFGCDIFTAIAIFKRPYLDVIKGTPPFIFMLVLAAALLILFPQIALFLRDLAFR.

12 helical membrane-spanning segments follow: residues 13 to 35 (LLLG…FMMF), 49 to 69 (MAGI…AADI), 79 to 99 (LINM…VSTA), 103 to 123 (TLFG…GSPL), 147 to 167 (IAFL…SGTS), 172 to 192 (FIAG…YCVI), 216 to 236 (LALW…GGIF), 237 to 257 (SPTE…FVVF), 273 to 293 (GLIT…SWII), 320 to 340 (ICVA…ILVL), 356 to 376 (VLVG…PPFG), and 400 to 420 (FIFM…IALF).

Belongs to the TRAP transporter large permease family. In terms of assembly, the complex comprises the extracytoplasmic solute receptor protein TeaA, and the two transmembrane proteins TeaB and TeaC.

The protein resides in the cell inner membrane. Part of the tripartite ATP-independent periplasmic (TRAP) transport system TeaABC involved in the uptake of ectoine and hydroxyectoine in response to osmotic upshock. Probably functions as a recovery system for synthesized ectoine that leaks out of the cell. This Halomonas elongata (strain ATCC 33173 / DSM 2581 / NBRC 15536 / NCIMB 2198 / 1H9) protein is Ectoine TRAP transporter large permease protein TeaC (teaC).